The sequence spans 242 residues: Biosynthetic peptidoglycan transglycosylase (242 aa).

Residues 15-35 (FLLLLMVVLAVFWGGGIALFS) form a helical membrane-spanning segment.

It belongs to the glycosyltransferase 51 family.

Its subcellular location is the cell inner membrane. It carries out the reaction [GlcNAc-(1-&gt;4)-Mur2Ac(oyl-L-Ala-gamma-D-Glu-L-Lys-D-Ala-D-Ala)](n)-di-trans,octa-cis-undecaprenyl diphosphate + beta-D-GlcNAc-(1-&gt;4)-Mur2Ac(oyl-L-Ala-gamma-D-Glu-L-Lys-D-Ala-D-Ala)-di-trans,octa-cis-undecaprenyl diphosphate = [GlcNAc-(1-&gt;4)-Mur2Ac(oyl-L-Ala-gamma-D-Glu-L-Lys-D-Ala-D-Ala)](n+1)-di-trans,octa-cis-undecaprenyl diphosphate + di-trans,octa-cis-undecaprenyl diphosphate + H(+). It functions in the pathway cell wall biogenesis; peptidoglycan biosynthesis. Peptidoglycan polymerase that catalyzes glycan chain elongation from lipid-linked precursors. The protein is Biosynthetic peptidoglycan transglycosylase of Shigella sonnei (strain Ss046).